The following is a 312-amino-acid chain: Methionyl-tRNA formyltransferase (312 aa).

109 to 112 is a (6S)-5,6,7,8-tetrahydrofolate binding site; the sequence is SLLP.

The protein belongs to the Fmt family.

The catalysed reaction is L-methionyl-tRNA(fMet) + (6R)-10-formyltetrahydrofolate = N-formyl-L-methionyl-tRNA(fMet) + (6S)-5,6,7,8-tetrahydrofolate + H(+). Attaches a formyl group to the free amino group of methionyl-tRNA(fMet). The formyl group appears to play a dual role in the initiator identity of N-formylmethionyl-tRNA by promoting its recognition by IF2 and preventing the misappropriation of this tRNA by the elongation apparatus. This is Methionyl-tRNA formyltransferase from Geotalea daltonii (strain DSM 22248 / JCM 15807 / FRC-32) (Geobacter daltonii).